We begin with the raw amino-acid sequence, 64 residues long: U-poneritoxin(01)-Om1a (64 aa).

An N-terminal signal peptide occupies residues 1–27; that stretch reads MKPSGLTFAFLVVFMMAIMYNSVQVTA. Residues 28-45 constitute a propeptide that is removed on maturation; that stretch reads DADADAEAEALANALAEA. A Methionine amide modification is found at Met62.

Post-translationally, truncated sequences of this peptide have also been found in the venom. It is possible they have been cleaved in the venom. In terms of tissue distribution, expressed by the venom gland.

Its subcellular location is the secreted. Antimicrobial peptide with activities against E.coli (MIC=1.3 uM), S.aureus (MIC=3.1 uM), and S.cerevisiae (MIC=50 uM). Also shows histamine-releasing activity (32.9% at 10 uM). Does not show hemolytic activity, even at 50 uM. It is a short peptide for which no alpha-helical region has been predicted. The polypeptide is U-poneritoxin(01)-Om1a (Odontomachus monticola (Trap-jaw ant)).